Consider the following 220-residue polypeptide: Protein myomaker (220 aa).

Residue M1 is a topological domain, extracellular. Residues 2–22 form a helical membrane-spanning segment; it reads GAFIAKMLLPTISSLVFVPAA. Topologically, residues 23–37 are cytoplasmic; the sequence is SVAAKRGFHMEAMVY. Residues 38-58 traverse the membrane as a helical segment; that stretch reads FFTMFFTAIYHACDGPGLSIL. The Extracellular segment spans residues 59–64; the sequence is CFMKYD. Residues 65 to 85 form a helical membrane-spanning segment; that stretch reads ILEYFSVYGTAISMWVTLLAL. Over 86-93 the chain is Cytoplasmic; sequence GDFDEPKR. A helical membrane pass occupies residues 94-110; the sequence is SSLTMFGVLTAAVRIYQ. Over 111-112 the chain is Extracellular; sequence DR. Residues 113–133 form a helical membrane-spanning segment; sequence LGYGIYSGPIGTAVFMITVKW. Residues 134 to 153 lie on the Cytoplasmic side of the membrane; the sequence is LQKMKEKKGLYPDKSVYTQQ. Residues 154–174 traverse the membrane as a helical segment; the sequence is VGPGCCFGALALMLRFYFEEW. A topological domain (extracellular) is located at residue D175. Residues 176–196 form a helical membrane-spanning segment; it reads YAYVHSFYHVSLAMSFILLLP. The Cytoplasmic portion of the chain corresponds to 197–220; the sequence is KKNRYAGTGRNAAKLNCYTLCCCV.

Belongs to the TMEM8 family.

Its subcellular location is the cell membrane. Its function is as follows. Myoblast-specific protein that mediates myoblast fusion, an essential step for the formation of multi-nucleated muscle fibers. Actively participates in the membrane fusion reaction by mediating the mixing of cell membrane lipids (hemifusion) upstream of mymx. This chain is Protein myomaker, found in Danio rerio (Zebrafish).